Here is a 428-residue protein sequence, read N- to C-terminus: Trigger factor (428 aa).

A PPIase FKBP-type domain is found at 166–250; the sequence is GDIVTFDFKG…IKNIKEKILP (85 aa).

The protein belongs to the FKBP-type PPIase family. Tig subfamily.

Its subcellular location is the cytoplasm. The catalysed reaction is [protein]-peptidylproline (omega=180) = [protein]-peptidylproline (omega=0). In terms of biological role, involved in protein export. Acts as a chaperone by maintaining the newly synthesized protein in an open conformation. Functions as a peptidyl-prolyl cis-trans isomerase. The chain is Trigger factor from Mycoplasma capricolum subsp. capricolum (strain California kid / ATCC 27343 / NCTC 10154).